The following is a 295-amino-acid chain: Indole-3-glycerol phosphate synthase (295 aa).

The protein belongs to the TrpC family.

It catalyses the reaction 1-(2-carboxyphenylamino)-1-deoxy-D-ribulose 5-phosphate + H(+) = (1S,2R)-1-C-(indol-3-yl)glycerol 3-phosphate + CO2 + H2O. It participates in amino-acid biosynthesis; L-tryptophan biosynthesis; L-tryptophan from chorismate: step 4/5. The sequence is that of Indole-3-glycerol phosphate synthase from Prochlorococcus marinus (strain MIT 9215).